Consider the following 559-residue polypeptide: Polypeptide N-acetylgalactosaminyltransferase 1 (559 aa).

The Cytoplasmic portion of the chain corresponds to 1–8 (MRKFAYCK). A helical; Signal-anchor for type II membrane protein transmembrane segment spans residues 9–28 (VVLATSLIWVLLDMFLLLYF). The Lumenal segment spans residues 29–559 (SECNKCDEKK…LRNVTLPEIF (531 aa)). Positions 45–66 (GDVLEPVQKPHEGPGEMGKPVV) are disordered. Residue asparagine 95 is glycosylated (N-linked (GlcNAc...) asparagine). 5 disulfides stabilise this stretch: cysteine 106–cysteine 339, cysteine 330–cysteine 408, cysteine 442–cysteine 459, cysteine 482–cysteine 497, and cysteine 523–cysteine 540. The interval 115–225 (LPTTSVVIVF…VGWLEPLLAR (111 aa)) is catalytic subdomain A. Residues aspartate 156 and arginine 186 each contribute to the substrate site. Mn(2+)-binding residues include aspartate 209 and histidine 211. The catalytic subdomain B stretch occupies residues 285 to 347 (PVRTPTMAGG…TCSHVGHVFR (63 aa)). Position 316 (tryptophan 316) interacts with substrate. Histidine 344 is a binding site for Mn(2+). Arginine 347 and tyrosine 352 together coordinate substrate. Positions 429–551 (SSLGEIRNVE…GSRSQQWLLR (123 aa)) constitute a Ricin B-type lectin domain. Asparagine 552 is a glycosylation site (N-linked (GlcNAc...) asparagine).

It belongs to the glycosyltransferase 2 family. GalNAc-T subfamily. It depends on Mn(2+) as a cofactor.

It is found in the golgi apparatus. Its subcellular location is the golgi stack membrane. The protein resides in the secreted. The enzyme catalyses L-seryl-[protein] + UDP-N-acetyl-alpha-D-galactosamine = a 3-O-[N-acetyl-alpha-D-galactosaminyl]-L-seryl-[protein] + UDP + H(+). The catalysed reaction is L-threonyl-[protein] + UDP-N-acetyl-alpha-D-galactosamine = a 3-O-[N-acetyl-alpha-D-galactosaminyl]-L-threonyl-[protein] + UDP + H(+). It functions in the pathway protein modification; protein glycosylation. Its function is as follows. Catalyzes the initial reaction in O-linked oligosaccharide biosynthesis, the transfer of an N-acetyl-D-galactosamine residue to a serine or threonine residue on the protein receptor. Has a broad spectrum of substrates such as apomucin-, MUC5AC-, MUC1- and MUC2-derived peptides. This Sus scrofa (Pig) protein is Polypeptide N-acetylgalactosaminyltransferase 1.